We begin with the raw amino-acid sequence, 151 residues long: Coiled-coil-helix-coiled-coil-helix domain-containing protein 2 (151 aa).

2 disordered regions span residues 1–50 (MPRG…AAAP) and 77–111 (GHAI…AQQQ). Low complexity predominate over residues 10–26 (SRMAPPASRAPQMRAAP). Residues 27 to 38 (RPAPVAQPPAAA) are compositionally biased toward pro residues. Low complexity-rich tracts occupy residues 39 to 50 (PPSAVGSSAAAP) and 100 to 111 (QEPQGTQPAQQQ). In terms of domain architecture, CHCH spans 111 to 151 (QQPCLYEIKQFLECAQNQGDIKLCEGFNEVLKQCRLANGLA). Short sequence motifs (cx9C motif) lie at residues 114 to 124 (CLYEIKQFLEC) and 134 to 144 (CEGFNEVLKQC). 2 disulfide bridges follow: Cys114-Cys144 and Cys124-Cys134.

As to quaternary structure, interacts with RBPJ.

It is found in the nucleus. The protein resides in the mitochondrion. Its subcellular location is the mitochondrion intermembrane space. Its function is as follows. Transcription factor. Binds to the oxygen responsive element of COX4I2 and activates its transcription under hypoxia conditions (4% oxygen), as well as normoxia conditions (20% oxygen). This Homo sapiens (Human) protein is Coiled-coil-helix-coiled-coil-helix domain-containing protein 2 (CHCHD2).